The primary structure comprises 429 residues: Adenylosuccinate synthetase (429 aa).

Residues 12 to 18 and 40 to 42 each bind GTP; these read GDEGKGK and GHT. The active-site Proton acceptor is D13. Residues D13 and G40 each contribute to the Mg(2+) site. Residues 13–16, 38–41, T129, R143, Q224, T239, and R303 each bind IMP; these read DEGK and NAGH. H41 acts as the Proton donor in catalysis. 299 to 305 is a substrate binding site; sequence ATTGRKR. GTP is bound by residues R305, 331–333, and 413–415; these read KLD and SVG.

Belongs to the adenylosuccinate synthetase family. Homodimer. The cofactor is Mg(2+).

The protein localises to the cytoplasm. It catalyses the reaction IMP + L-aspartate + GTP = N(6)-(1,2-dicarboxyethyl)-AMP + GDP + phosphate + 2 H(+). The protein operates within purine metabolism; AMP biosynthesis via de novo pathway; AMP from IMP: step 1/2. Functionally, plays an important role in the de novo pathway of purine nucleotide biosynthesis. Catalyzes the first committed step in the biosynthesis of AMP from IMP. The sequence is that of Adenylosuccinate synthetase from Desulfosudis oleivorans (strain DSM 6200 / JCM 39069 / Hxd3) (Desulfococcus oleovorans).